A 265-amino-acid chain; its full sequence is uncharacterized protein (265 aa).

The chain crosses the membrane as a helical span at residues 1 to 21 (MAFNNSTIIIIIVIAFAFFLI). N74 and N142 each carry an N-linked (GlcNAc...) asparagine; by host glycan.

The protein resides in the host membrane. It localises to the virion. This is an uncharacterized protein from Acanthamoeba polyphaga mimivirus (APMV).